Reading from the N-terminus, the 233-residue chain is Mediator of RNA polymerase II transcription subunit 7 (233 aa).

Residue Lys185 forms a Glycyl lysine isopeptide (Lys-Gly) (interchain with G-Cter in SUMO1); alternate linkage. Residue Lys185 forms a Glycyl lysine isopeptide (Lys-Gly) (interchain with G-Cter in SUMO2); alternate linkage. The tract at residues 187 to 213 (EPMDADDSNNCTGQNEHQRENSGHRRD) is disordered. A Phosphoserine modification is found at Ser194. Basic and acidic residues predominate over residues 202-213 (EHQRENSGHRRD).

The protein belongs to the Mediator complex subunit 7 family. Component of the Mediator complex, which is composed of MED1, MED4, MED6, MED7, MED8, MED9, MED10, MED11, MED12, MED13, MED13L, MED14, MED15, MED16, MED17, MED18, MED19, MED20, MED21, MED22, MED23, MED24, MED25, MED26, MED27, MED29, MED30, MED31, CCNC, CDK8 and CDC2L6/CDK11. The MED12, MED13, CCNC and CDK8 subunits form a distinct module termed the CDK8 module. Mediator containing the CDK8 module is less active than Mediator lacking this module in supporting transcriptional activation. Individual preparations of the Mediator complex lacking one or more distinct subunits have been variously termed ARC, CRSP, DRIP, PC2, SMCC and TRAP. Constitutively sumoylated.

It is found in the nucleus. Component of the Mediator complex, a coactivator involved in the regulated transcription of nearly all RNA polymerase II-dependent genes. Mediator functions as a bridge to convey information from gene-specific regulatory proteins to the basal RNA polymerase II transcription machinery. Mediator is recruited to promoters by direct interactions with regulatory proteins and serves as a scaffold for the assembly of a functional preinitiation complex with RNA polymerase II and the general transcription factors. In Homo sapiens (Human), this protein is Mediator of RNA polymerase II transcription subunit 7 (MED7).